Reading from the N-terminus, the 75-residue chain is UPF0352 protein VF_1649 (75 aa).

The protein belongs to the UPF0352 family.

This is UPF0352 protein VF_1649 from Aliivibrio fischeri (strain ATCC 700601 / ES114) (Vibrio fischeri).